A 72-amino-acid polypeptide reads, in one-letter code: Prokaryotic ubiquitin-like protein Pup (72 aa).

A compositionally biased stretch (gly residues) spans 1–10; sequence MATKDTGGGQ. The disordered stretch occupies residues 1 to 45; it reads MATKDTGGGQQKATRSTEEVEEQAQDAQASEDLAERQEKLSDDVD. A coiled-coil region spans residues 10 to 60; that stretch reads QQKATRSTEEVEEQAQDAQASEDLAERQEKLSDDVDSVLDEIDDVLEENAE. Residues 28–66 form an ARC ATPase binding region; that stretch reads QASEDLAERQEKLSDDVDSVLDEIDDVLEENAEDFVRSF. The segment covering 33-42 has biased composition (basic and acidic residues); sequence LAERQEKLSD. Deamidated glutamine is present on glutamine 72. Residue glutamine 72 forms an Isoglutamyl lysine isopeptide (Gln-Lys) (interchain with K-? in acceptor proteins) linkage.

Belongs to the prokaryotic ubiquitin-like protein family. As to quaternary structure, strongly interacts with the proteasome-associated ATPase ARC through a hydrophobic interface; the interacting region of Pup lies in its C-terminal half. There is one Pup binding site per ARC hexamer ring. Is modified by deamidation of its C-terminal glutamine to glutamate by the deamidase Dop, a prerequisite to the subsequent pupylation process.

It functions in the pathway protein degradation; proteasomal Pup-dependent pathway. In terms of biological role, protein modifier that is covalently attached to lysine residues of substrate proteins, thereby targeting them for proteasomal degradation. The tagging system is termed pupylation. The sequence is that of Prokaryotic ubiquitin-like protein Pup from Streptomyces griseus subsp. griseus (strain JCM 4626 / CBS 651.72 / NBRC 13350 / KCC S-0626 / ISP 5235).